The following is an 80-amino-acid chain: Small membrane A-kinase anchor protein (80 aa).

The N-myristoyl glycine moiety is linked to residue G2.

This sequence belongs to the small membrane AKAP family. May be palmitoylated at Cys-3.

Its subcellular location is the cell membrane. Binds to type I regulatory subunits of protein kinase A and may anchor/target them to the plasma membrane. In Tetraodon nigroviridis (Spotted green pufferfish), this protein is Small membrane A-kinase anchor protein.